The chain runs to 224 residues: LexA repressor (224 aa).

Positions 31 to 51 (RAEIATELGFRSANAAEEHLQ) form a DNA-binding region, H-T-H motif. Catalysis depends on for autocatalytic cleavage activity residues S142 and K179.

It belongs to the peptidase S24 family. As to quaternary structure, homodimer.

It carries out the reaction Hydrolysis of Ala-|-Gly bond in repressor LexA.. Its function is as follows. Represses a number of genes involved in the response to DNA damage (SOS response), including recA and lexA. In the presence of single-stranded DNA, RecA interacts with LexA causing an autocatalytic cleavage which disrupts the DNA-binding part of LexA, leading to derepression of the SOS regulon and eventually DNA repair. This chain is LexA repressor, found in Albidiferax ferrireducens (strain ATCC BAA-621 / DSM 15236 / T118) (Rhodoferax ferrireducens).